The following is a 117-amino-acid chain: Protein RALF-like 27 (117 aa).

An N-terminal signal peptide occupies residues 1–27 (MTKTFFSFSFFFTSSLLLLLAATSATA). The propeptide at 28-71 (STGNVTSGLRYDGCAPGDTVGECITATVEEEDEEGVEAVVRRIL) is removed in mature form. The N-linked (GlcNAc...) asparagine glycan is linked to asparagine 31. 2 disulfides stabilise this stretch: cysteine 88–cysteine 96 and cysteine 107–cysteine 113.

The protein belongs to the plant rapid alkalinization factor (RALF) family.

It localises to the secreted. Its function is as follows. Cell signaling peptide that may regulate plant stress, growth, and development. Mediates a rapid alkalinization of extracellular space by mediating a transient increase in the cytoplasmic Ca(2+) concentration leading to a calcium-dependent signaling events through a cell surface receptor and a concomitant activation of some intracellular mitogen-activated protein kinases. This is Protein RALF-like 27 (RALFL27) from Arabidopsis thaliana (Mouse-ear cress).